The primary structure comprises 179 residues: Cell division protein ZapC (179 aa).

It belongs to the ZapC family. As to quaternary structure, interacts directly with FtsZ.

It is found in the cytoplasm. Contributes to the efficiency of the cell division process by stabilizing the polymeric form of the cell division protein FtsZ. Acts by promoting interactions between FtsZ protofilaments and suppressing the GTPase activity of FtsZ. The polypeptide is Cell division protein ZapC (Aliivibrio salmonicida (strain LFI1238) (Vibrio salmonicida (strain LFI1238))).